Reading from the N-terminus, the 109-residue chain is Phosphocarrier protein HPr (109 aa).

The HPr domain maps to 22–109; that stretch reads ELSAVFTIRN…EVFNSGFGEL (88 aa). The Pros-phosphohistidine intermediate role is filled by His-36.

It belongs to the HPr family.

It localises to the cytoplasm. Its function is as follows. General (non sugar-specific) component of the phosphoenolpyruvate-dependent sugar phosphotransferase system (sugar PTS). This major carbohydrate active-transport system catalyzes the phosphorylation of incoming sugar substrates concomitantly with their translocation across the cell membrane. The phosphoryl group from phosphoenolpyruvate (PEP) is transferred to the phosphoryl carrier protein HPr by enzyme I. Phospho-HPr then transfers it to the PTS EIIA domain. The protein is Phosphocarrier protein HPr (ptsH) of Chlamydia trachomatis serovar D (strain ATCC VR-885 / DSM 19411 / UW-3/Cx).